Here is a 336-residue protein sequence, read N- to C-terminus: Anthranilate phosphoribosyltransferase (336 aa).

5-phospho-alpha-D-ribose 1-diphosphate-binding positions include G81, 84–85 (GD), S89, 91–94 (NIST), 109–117 (KHGNRGLSS), and A121. Position 81 (G81) interacts with anthranilate. Residue S93 coordinates Mg(2+). Residue N112 coordinates anthranilate. R167 lines the anthranilate pocket. Positions 225 and 226 each coordinate Mg(2+).

Belongs to the anthranilate phosphoribosyltransferase family. As to quaternary structure, homodimer. Mg(2+) serves as cofactor.

It catalyses the reaction N-(5-phospho-beta-D-ribosyl)anthranilate + diphosphate = 5-phospho-alpha-D-ribose 1-diphosphate + anthranilate. It functions in the pathway amino-acid biosynthesis; L-tryptophan biosynthesis; L-tryptophan from chorismate: step 2/5. Catalyzes the transfer of the phosphoribosyl group of 5-phosphorylribose-1-pyrophosphate (PRPP) to anthranilate to yield N-(5'-phosphoribosyl)-anthranilate (PRA). The protein is Anthranilate phosphoribosyltransferase of Mesorhizobium japonicum (strain LMG 29417 / CECT 9101 / MAFF 303099) (Mesorhizobium loti (strain MAFF 303099)).